A 319-amino-acid polypeptide reads, in one-letter code: Protease HtpX homolog (319 aa).

2 helical membrane passes run 6 to 26 and 28 to 48; these read TAML…VIGG and GGMM…YWNS. His-130 lines the Zn(2+) pocket. Residue Glu-131 is part of the active site. His-134 is a Zn(2+) binding site. The next 2 helical transmembrane spans lie at 145–165 and 172–192; these read LTAT…FFGG and PLGF…AMLV. Glu-201 serves as a coordination point for Zn(2+). The tract at residues 279–319 is disordered; that stretch reads REMSAGSTAPARPDNAVRRSRSVPKTGWGRGGSEPPKGPWS.

The protein belongs to the peptidase M48B family. Zn(2+) serves as cofactor.

It is found in the cell inner membrane. This Sinorhizobium fredii (strain NBRC 101917 / NGR234) protein is Protease HtpX homolog.